A 173-amino-acid chain; its full sequence is uncharacterized protein (173 aa).

2 disordered regions span residues 1 to 23 (MGDLPWAPPEAQAPSTAGAGDVA) and 48 to 173 (TGAA…APQR). Low complexity predominate over residues 49 to 60 (GAAPGSAQAGPP). Over residues 70–83 (PRGPQAPPRLPPSL) the composition is skewed to pro residues. Positions 123–136 (PACAGSSAPGSPAA) are enriched in low complexity.

This is an uncharacterized protein from Homo sapiens (Human).